The chain runs to 135 residues: Adult cuticle protein 1 (135 aa).

A signal peptide spans 1–19 (MKFAVAVIFTLALAMGVQS). A run of 3 repeats spans residues 72–75 (AAPA), 78–81 (AAPA), and 128–131 (AAPA).

As to expression, detected in the epidermis underlying the head and thorax (including legs and wings), but not in the abdominal epidermis of newly eclosed flies.

In terms of biological role, component of the cuticle of the adult fruit fly. Could be involved in thickening of the hard adult cuticle. The sequence is that of Adult cuticle protein 1 (Acp1) from Drosophila melanogaster (Fruit fly).